Reading from the N-terminus, the 98-residue chain is NADH-ubiquinone oxidoreductase chain 4L (98 aa).

Transmembrane regions (helical) follow at residues 1–21 (MSLV…GLLM), 29–49 (SLLC…LTIL), and 61–81 (IILL…LVMV).

It belongs to the complex I subunit 4L family. Core subunit of respiratory chain NADH dehydrogenase (Complex I) which is composed of 45 different subunits.

The protein localises to the mitochondrion inner membrane. The enzyme catalyses a ubiquinone + NADH + 5 H(+)(in) = a ubiquinol + NAD(+) + 4 H(+)(out). Its function is as follows. Core subunit of the mitochondrial membrane respiratory chain NADH dehydrogenase (Complex I) which catalyzes electron transfer from NADH through the respiratory chain, using ubiquinone as an electron acceptor. Part of the enzyme membrane arm which is embedded in the lipid bilayer and involved in proton translocation. The chain is NADH-ubiquinone oxidoreductase chain 4L (MT-ND4L) from Muntiacus vuquangensis (Giant muntjac).